A 245-amino-acid polypeptide reads, in one-letter code: Ribosomal RNA small subunit methyltransferase G (245 aa).

S-adenosyl-L-methionine-binding positions include G79, F84, 130–131, and R150; that span reads AE.

The protein belongs to the methyltransferase superfamily. RNA methyltransferase RsmG family.

The protein resides in the cytoplasm. Its function is as follows. Specifically methylates the N7 position of a guanine in 16S rRNA. The sequence is that of Ribosomal RNA small subunit methyltransferase G from Limosilactobacillus fermentum (strain NBRC 3956 / LMG 18251) (Lactobacillus fermentum).